A 62-amino-acid chain; its full sequence is Potassium channel toxin alpha-KTx Tx308 (62 aa).

The N-terminal stretch at 1-18 is a signal peptide; sequence MQKLFIVLLLFCILRLDA. 3 cysteine pairs are disulfide-bonded: Cys-28/Cys-46, Cys-33/Cys-59, and Cys-37/Cys-61.

It belongs to the short scorpion toxin superfamily. Potassium channel inhibitor family. Alpha-KTx 23 subfamily. Expressed by the venom gland.

It is found in the secreted. May block potassium channels. In Buthus israelis (Israeli scorpion), this protein is Potassium channel toxin alpha-KTx Tx308.